Consider the following 147-residue polypeptide: MSFLSAEEKGLVNGLWSKVNVDEVGGEALGRLLVVYPWTQRFFQSFGDLSSADAIMSNAKVKAHGKKVLNSFSDGLKNIDDLKGAFAKLSELHCDKLHVDPENFRLLGNVLVCVLAHHFGHEFNPQVQAAFQKVVAGVASALAHRYH.

N-acetylserine is present on serine 2. In terms of domain architecture, Globin spans 3-147 (FLSAEEKGLV…VASALAHRYH (145 aa)). Residue lysine 18 is modified to N6-succinyllysine. A phosphoserine mark is found at serine 45 and serine 51. Lysine 60 is modified (N6-succinyllysine). Heme b-binding residues include histidine 64 and histidine 93. Arginine 105 bears the Asymmetric dimethylarginine mark.

This sequence belongs to the globin family. Heterotetramer of two alpha chains and two beta chains. Red blood cells.

Its function is as follows. Involved in oxygen transport from the lung to the various peripheral tissues. The protein is Hemoglobin subunit beta-1 (HBB1) of Panthera onca (Jaguar).